A 484-amino-acid chain; its full sequence is Putative myrosinase 6 (484 aa).

Residue asparagine 28 is glycosylated (N-linked (GlcNAc...) asparagine). A beta-D-glucoside contacts are provided by residues glutamine 39, histidine 140, and 184–185 (NQ). A disulfide bond links cysteine 204 and cysteine 207. Asparagine 260 carries N-linked (GlcNAc...) asparagine glycosylation. A beta-D-glucoside is bound by residues tyrosine 321, tryptophan 440, 447 to 448 (EF), and phenylalanine 456. Asparagine 462 carries an N-linked (GlcNAc...) asparagine glycan.

It belongs to the glycosyl hydrolase 1 family.

The catalysed reaction is a thioglucoside + H2O = a sugar + a thiol.. This is Putative myrosinase 6 from Arabidopsis thaliana (Mouse-ear cress).